A 485-amino-acid chain; its full sequence is NADH-quinone oxidoreductase subunit N (485 aa).

14 helical membrane passes run 8–28 (LIAL…MLSI), 35–55 (FLNA…LWFV), 71–91 (GFAM…CTFA), 105–125 (FYLL…ANHL), 127–147 (ALFL…GYAF), 159–179 (YTIL…LVYA), 203–223 (LLAG…LVPF), 235–255 (PAPV…GVVM), 271–291 (VVLG…ALSQ), 297–317 (LLGY…IALQ), 326–346 (VGVY…VVSL), 373–393 (AAVM…LGFI), 408–430 (WWLV…RVAV), and 455–475 (IVVL…QPLI).

This sequence belongs to the complex I subunit 2 family. NDH-1 is composed of 13 different subunits. Subunits NuoA, H, J, K, L, M, N constitute the membrane sector of the complex.

The protein resides in the cell inner membrane. It carries out the reaction a quinone + NADH + 5 H(+)(in) = a quinol + NAD(+) + 4 H(+)(out). NDH-1 shuttles electrons from NADH, via FMN and iron-sulfur (Fe-S) centers, to quinones in the respiratory chain. The immediate electron acceptor for the enzyme in this species is believed to be ubiquinone. Couples the redox reaction to proton translocation (for every two electrons transferred, four hydrogen ions are translocated across the cytoplasmic membrane), and thus conserves the redox energy in a proton gradient. This chain is NADH-quinone oxidoreductase subunit N, found in Salmonella arizonae (strain ATCC BAA-731 / CDC346-86 / RSK2980).